The following is a 232-amino-acid chain: UPF0177 protein in abiGi 5'region (232 aa).

6 helical membrane-spanning segments follow: residues Tyr12 to Tyr32, Val47 to Ile67, Leu86 to Tyr106, Ser124 to Phe144, Ile165 to Tyr185, and Ile206 to Ile226.

Belongs to the UPF0177 family.

The protein resides in the cell membrane. In terms of biological role, the function of this protein is currently unknown, but it has been shown that it is not necessary for phage resistance. This Lactococcus lactis subsp. cremoris (Streptococcus cremoris) protein is UPF0177 protein in abiGi 5'region.